The chain runs to 645 residues: DNA mismatch repair protein MutL (645 aa).

The protein belongs to the DNA mismatch repair MutL/HexB family.

In terms of biological role, this protein is involved in the repair of mismatches in DNA. It is required for dam-dependent methyl-directed DNA mismatch repair. May act as a 'molecular matchmaker', a protein that promotes the formation of a stable complex between two or more DNA-binding proteins in an ATP-dependent manner without itself being part of a final effector complex. The chain is DNA mismatch repair protein MutL from Pediococcus pentosaceus (strain ATCC 25745 / CCUG 21536 / LMG 10740 / 183-1w).